The primary structure comprises 596 residues: Estrogen receptor (596 aa).

Residues 1 to 185 (MTMTLHTKAS…AMESAKETRY (185 aa)) are modulating (transactivation AF-1); mediates interaction with MACROD1. The O-linked (GlcNAc) serine glycan is linked to Ser-10. A required for interaction with NCOA1 region spans residues 36-48 (ERPLGEVYMDSSK). The tract at residues 36-175 (ERPLGEVYMD…LASTSDKGSM (140 aa)) is interaction with DDX5; self-association. Residues Ser-104 and Ser-106 each carry the phosphoserine; by CDK2 modification. Residue Ser-119 is modified to Phosphoserine. Residues 144–175 (EAGPPAYYRPNSDNRRQGGRERLASTSDKGSM) form a disordered region. Residues 155-166 (SDNRRQGGRERL) are compositionally biased toward basic and acidic residues. Phosphoserine; by CK2 is present on Ser-168. NR C4-type zinc fingers lie at residues 186–206 (CAVCNDYASGYHYGVWSCEGC) and 222–246 (CPATNQCTIDKNRRKSCQACRLRKC). Positions 186 to 251 (CAVCNDYASG…RLRKCYEVGM (66 aa)) form a DNA-binding region, nuclear receptor. The segment at 186–311 (CAVCNDYASG…TKKNSPVLSL (126 aa)) is mediates interaction with DNTTIP2. The segment at 252 to 311 (MKGGIRKDRRGGRMLKHKRQRDDGEGRNEAVPSGDMRAANLWPSPIMIKHTKKNSPVLSL) is hinge. Residues 259 to 270 (DRRGGRMLKHKR) show a composition bias toward basic residues. The segment at 259–285 (DRRGGRMLKHKRQRDDGEGRNEAVPSG) is disordered. Arg-261 carries the asymmetric dimethylarginine; by PRMT1 modification. The tract at residues 263-596 (GRMLKHKRQR…GEAENFPSTV (334 aa)) is interaction with AKAP13. Residues 265–595 (MLKHKRQRDD…TGEAENFPST (331 aa)) are self-association. The region spanning 312–548 (TADQMISALL…DLLLEMLDAH (237 aa)) is the NR LBD domain. Residues 312–595 (TADQMISALL…TGEAENFPST (284 aa)) are transactivation AF-2. Residues Glu-354 and Arg-395 each coordinate 17beta-estradiol. Residue Cys-448 is the site of S-palmitoyl cysteine attachment. His-525 contacts 17beta-estradiol. Phosphotyrosine; by Tyr-kinases is present on Tyr-538. A glycan (O-linked (GlcNAc) threonine) is linked at Thr-572.

The protein belongs to the nuclear hormone receptor family. NR3 subfamily. As to quaternary structure, binds DNA as a homodimer. Can form a heterodimer with ESR2. Interacts with coactivator NCOA5. Interacts with PELP1, the interaction is enhanced by 17-beta-estradiol; the interaction increases ESR1 transcriptional activity. Interacts with NCOA7; the interaction is ligand-inducible. Interacts with AKAP13, CUEDC2, HEXIM1, KDM5A, MAP1S, SMARD1, and UBE1C. Interacts with MUC1; the interaction is stimulated by 7 beta-estradiol (E2) and enhances ESR1-mediated transcription. Interacts with DNTTIP2, and UIMC1. Interacts with KMT2D/MLL2. Interacts with ATAD2; the interaction is enhanced by estradiol. Interacts with KIF18A and LDB1. Interacts with RLIM (via its C-terminus). Interacts with MACROD1. Interacts with SH2D4A and PLCG. Interacts with SH2D4A; the interaction blocks binding to PLCG and inhibits estrogen-induced cell proliferation. Interacts with DYNLL1. Interacts with CCDC62; the interaction requires estradiol and appears to enhance the transcription of target genes. Interacts with NR2C1; the interaction prevents homodimerization of ESR1 and suppresses its transcriptional activity and cell growth. Interacts with DNAAF4. Interacts with PRMT2. Interacts with RBFOX2. Interacts with EP300; the interaction is estrogen-dependent and enhanced by CITED1. Interacts with CITED1; the interaction is estrogen-dependent. Interacts with FAM120B, FOXL2, PHB2 and SLC30A9. Interacts with coactivators NCOA3 and NCOA6. Interacts with STK3/MST2 only in the presence of SAV1 and vice-versa. Binds to CSNK1D. Interacts with NCOA2; NCOA2 can interact with ESR1 AF-1 and AF-2 domains simultaneously and mediate their transcriptional synergy. Interacts with DDX5. Interacts with NCOA1; the interaction seems to require a self-association of N-terminal and C-terminal regions. Interacts with ZNF366, DDX17, NFKB1, RELA, SP1 and SP3. Interacts with NRIP1. Interacts with GPER1; the interaction occurs in an estrogen-dependent manner. Interacts with CLOCK and the interaction is stimulated by estrogen. Interacts with TRIP4 (ufmylated); estrogen dependent. Interacts with LMTK3; the interaction phosphorylates ESR1 (in vitro) and protects it against proteasomal degradation. Interacts with CCAR2 (via N-terminus) in a ligand-independent manner. Interacts with ZFHX3. Interacts with SFR1 in a ligand-dependent and -independent manner. Interacts with DCAF13, LATS1 and DCAF1; regulates ESR1 ubiquitination and ubiquitin-mediated proteasomal degradation. Interacts (via DNA-binding domain) with POU4F2 (C-terminus); this interaction increases the estrogen receptor ESR1 transcriptional activity in a DNA- and ligand 17-beta-estradiol-independent manner. Interacts with ESRRB isoform 1. Interacts with UBE3A and WBP2. Interacts with GTF2B. Interacts with RBM39. In the absence of hormonal ligand, interacts with TACC1. Interacts with PI3KR1 or PI3KR2 and PTK2/FAK1. Interacts with SRC. Interacts with BAG1; the interaction is promoted in the absence of estradiol (17-beta-estradiol/E2). Interacts with and ubiquitinated by STUB1; the interaction is promoted in the absence of estradiol (17-beta-estradiol/E2). Interacts with NEDD8. Glycosylated; contains N-acetylglucosamine, probably O-linked. Post-translationally, ubiquitinated; regulated by LATS1 via DCAF1 it leads to ESR1 proteasomal degradation. Deubiquitinated by OTUB1. Ubiquitinated by STUB1/CHIP; in the CA1 hippocampal region following loss of endogenous circulating estradiol (17-beta-estradiol/E2). Ubiquitinated by UBR5, leading to its degradation: UBR5 specifically recognizes and binds ligand-bound ESR1 when it is not associated with coactivators (NCOAs). In presence of NCOAs, the UBR5-degron is not accessible, preventing its ubiquitination and degradation. In terms of processing, phosphorylated by cyclin A/CDK2 and CK1. Phosphorylation probably enhances transcriptional activity. Dephosphorylation at Ser-119 by PPP5C inhibits its transactivation activity. Phosphorylated by LMTK3 (in vitro). Palmitoylated at Cys-448 by ZDHHC7 and ZDHHC21. Palmitoylation is required for plasma membrane targeting and for rapid intracellular signaling via ERK and AKT kinases and cAMP generation, but not for signaling mediated by the nuclear hormone receptor. Post-translationally, dimethylated by PRMT1 at Arg-261. The methylation may favor cytoplasmic localization. Demethylated by JMJD6 at Arg-261.

Its subcellular location is the nucleus. The protein localises to the cytoplasm. It localises to the golgi apparatus. It is found in the cell membrane. Nuclear hormone receptor. The steroid hormones and their receptors are involved in the regulation of eukaryotic gene expression and affect cellular proliferation and differentiation in target tissues. Ligand-dependent nuclear transactivation involves either direct homodimer binding to a palindromic estrogen response element (ERE) sequence or association with other DNA-binding transcription factors, such as AP-1/c-Jun, c-Fos, ATF-2, Sp1 and Sp3, to mediate ERE-independent signaling. Ligand binding induces a conformational change allowing subsequent or combinatorial association with multiprotein coactivator complexes through LXXLL motifs of their respective components. Mutual transrepression occurs between the estrogen receptor (ER) and NF-kappa-B in a cell-type specific manner. Decreases NF-kappa-B DNA-binding activity and inhibits NF-kappa-B-mediated transcription from the IL6 promoter and displace RELA/p65 and associated coregulators from the promoter. Recruited to the NF-kappa-B response element of the CCL2 and IL8 promoters and can displace CREBBP. Present with NF-kappa-B components RELA/p65 and NFKB1/p50 on ERE sequences. Can also act synergistically with NF-kappa-B to activate transcription involving respective recruitment adjacent response elements; the function involves CREBBP. Can activate the transcriptional activity of TFF1. Also mediates membrane-initiated estrogen signaling involving various kinase cascades. Essential for MTA1-mediated transcriptional regulation of BRCA1 and BCAS3. Maintains neuronal survival in response to ischemic reperfusion injury when in the presence of circulating estradiol (17-beta-estradiol/E2). This is Estrogen receptor (ESR1) from Bos taurus (Bovine).